A 257-amino-acid polypeptide reads, in one-letter code: Thioredoxin-dependent peroxide reductase, mitochondrial (257 aa).

The N-terminal 62 residues, 1–62, are a transit peptide targeting the mitochondrion; sequence MAAAAGRLLW…FAFSTSSSFH (62 aa). The Thioredoxin domain maps to 64–222; sequence PAVTQHAPHF…PLRLVKAFQF (159 aa). Lys-84 is subject to N6-succinyllysine. Lys-92 carries the post-translational modification N6-acetyllysine; alternate. An N6-succinyllysine; alternate modification is found at Lys-92. Cys-109 (cysteine sulfenic acid (-SOH) intermediate) is an active-site residue. The residue at position 147 (Thr-147) is a Phosphothreonine.

Belongs to the peroxiredoxin family. AhpC/Prx1 subfamily. As to quaternary structure, homodimer; disulfide-linked, upon oxidation. 6 homodimers assemble to form a ring-like dodecamer. Interacts with NEK6. Interacts with LRRK2. Interacts with MAP3K13. Interacts with RPS6KC1 (via PX domain). In terms of processing, phosphorylated by LRRK2; phosphorylation reduces perodixase activity. Post-translationally, the enzyme can be inactivated by further oxidation of the cysteine sulfenic acid (C(P)-SOH) to sulphinic acid (C(P)-SO2H) and sulphonic acid (C(P)-SO3H) instead of its condensation to a disulfide bond. S-palmitoylated. In terms of tissue distribution, ubiquitous.

The protein resides in the mitochondrion. Its subcellular location is the cytoplasm. The protein localises to the early endosome. The catalysed reaction is a hydroperoxide + [thioredoxin]-dithiol = an alcohol + [thioredoxin]-disulfide + H2O. In terms of biological role, thiol-specific peroxidase that catalyzes the reduction of hydrogen peroxide and organic hydroperoxides to water and alcohols, respectively. Plays a role in cell protection against oxidative stress by detoxifying peroxides. Acts synergistically with MAP3K13 to regulate the activation of NF-kappa-B in the cytosol. Required for the maintenance of physical strength. This Rattus norvegicus (Rat) protein is Thioredoxin-dependent peroxide reductase, mitochondrial (Prdx3).